Here is a 269-residue protein sequence, read N- to C-terminus: 4-hydroxy-tetrahydrodipicolinate reductase (269 aa).

Residues 9–14 (GCAGKM), Asp-35, 102–104 (GTT), and 128–131 (APNF) contribute to the NAD(+) site. The Proton donor/acceptor role is filled by His-158. Residue His-159 coordinates (S)-2,3,4,5-tetrahydrodipicolinate. The Proton donor role is filled by Lys-162. 168-169 (GT) contacts (S)-2,3,4,5-tetrahydrodipicolinate.

This sequence belongs to the DapB family.

Its subcellular location is the cytoplasm. It carries out the reaction (S)-2,3,4,5-tetrahydrodipicolinate + NAD(+) + H2O = (2S,4S)-4-hydroxy-2,3,4,5-tetrahydrodipicolinate + NADH + H(+). It catalyses the reaction (S)-2,3,4,5-tetrahydrodipicolinate + NADP(+) + H2O = (2S,4S)-4-hydroxy-2,3,4,5-tetrahydrodipicolinate + NADPH + H(+). The protein operates within amino-acid biosynthesis; L-lysine biosynthesis via DAP pathway; (S)-tetrahydrodipicolinate from L-aspartate: step 4/4. Its function is as follows. Catalyzes the conversion of 4-hydroxy-tetrahydrodipicolinate (HTPA) to tetrahydrodipicolinate. This chain is 4-hydroxy-tetrahydrodipicolinate reductase, found in Gloeobacter violaceus (strain ATCC 29082 / PCC 7421).